The following is a 25-amino-acid chain: Neuromedin-U-25 (25 aa).

N25 is subject to Asparagine amide.

The protein belongs to the NmU family.

The protein localises to the secreted. Functionally, stimulates uterine smooth muscle contraction and causes selective vasoconstriction. The chain is Neuromedin-U-25 from Rana temporaria (European common frog).